The sequence spans 640 residues: Kelch-like protein 17 (640 aa).

The segment at 1–50 is disordered; that stretch reads MQPRGERPAGRTQSPEHSSPGPGPEAPPPPQPPAPEAERARPRQARPAAP. Pro residues predominate over residues 21-35; it reads GPGPEAPPPPQPPAP. In terms of domain architecture, BTB spans 90–157; that stretch reads CDIVLHVAAK…AYTAEIVVGE (68 aa). One can recognise a BACK domain in the interval 192 to 294; it reads CLGIRGFADT…SRDFLLGHVD (103 aa). The segment at 287–639 is interaction with F-actin; sequence DFLLGHVDAE…SPTLSVSSTS (353 aa). Kelch repeat units follow at residues 341–387, 388–434, 436–481, 482–528, 530–575, and 576–622; these read VLFA…AVGN, RLYA…ALHG, LYAA…TLDG, NLYA…VLEG, LYVA…AMDG, and WLYA…VLEL. Positions 638–640 are interaction with PDZK1; it reads TSL.

In terms of assembly, interacts with F-actin; the interaction disrupts the F-actin structures and leads to marked changes of neuronal morphology. Component of a complex, composed of PDZK1, SYNGAP1, KLHL17 and NMDA receptors. Interacts directly with PDZK1 (via PDZ1 domain); the interaction is important for integrity of actin cytoskeleton structures in neurons. Interacts with DLG4 and SYNGAP1. Interacts (via kelch repeats) with GRIK2 (via C-terminus); the interaction targets GRIK2 for degradation via ubiquitin-proteasome pathway. Interacts with GRIK1. Interacts with (via BTB domain) CUL3; the interaction regulates surface GRIK2 expression.

Its subcellular location is the postsynaptic density. The protein resides in the synapse. It participates in protein modification; protein ubiquitination. Its function is as follows. Substrate-recognition component of some cullin-RING-based BCR (BTB-CUL3-RBX1) E3 ubiquitin-protein ligase complexes. The BCR(KLHL17) complex mediates the ubiquitination and subsequent degradation of GLUR6. May play a role in the actin-based neuronal function. This is Kelch-like protein 17 (Klhl17) from Mus musculus (Mouse).